The following is a 332-amino-acid chain: Ribosomal RNA small subunit methyltransferase H (332 aa).

Residues 36–38, D54, F81, D102, and Q109 contribute to the S-adenosyl-L-methionine site; that span reads GGY. Positions 297 to 318 are disordered; sequence ARSAKLRGAERTEAPAHAAGDL.

It belongs to the methyltransferase superfamily. RsmH family.

It localises to the cytoplasm. It carries out the reaction cytidine(1402) in 16S rRNA + S-adenosyl-L-methionine = N(4)-methylcytidine(1402) in 16S rRNA + S-adenosyl-L-homocysteine + H(+). Functionally, specifically methylates the N4 position of cytidine in position 1402 (C1402) of 16S rRNA. The sequence is that of Ribosomal RNA small subunit methyltransferase H from Rhodopseudomonas palustris (strain TIE-1).